The sequence spans 600 residues: DNA ligase (600 aa).

Residue Asp-258 coordinates ATP. The active-site N6-AMP-lysine intermediate is the Lys-260. The ATP site is built by Arg-265, Arg-280, Glu-310, Phe-350, Arg-427, and Lys-433.

The protein belongs to the ATP-dependent DNA ligase family. Requires Mg(2+) as cofactor.

It carries out the reaction ATP + (deoxyribonucleotide)n-3'-hydroxyl + 5'-phospho-(deoxyribonucleotide)m = (deoxyribonucleotide)n+m + AMP + diphosphate.. Its activity is regulated as follows. Inhibited by PCNA123 and PCNA323. In terms of biological role, DNA ligase that seals nicks in double-stranded DNA during DNA replication, DNA recombination and DNA repair. The chain is DNA ligase from Sulfurisphaera tokodaii (strain DSM 16993 / JCM 10545 / NBRC 100140 / 7) (Sulfolobus tokodaii).